Consider the following 171-residue polypeptide: T-cell surface glycoprotein CD3 delta chain (171 aa).

The signal sequence occupies residues 1-21 (MEHSTFLSGLVLATLLSQVSP). Over 22 to 105 (FKIPVEELED…CVELDPATLA (84 aa)) the chain is Extracellular. Cysteine 37 and cysteine 73 are joined by a disulfide. Residues asparagine 38, asparagine 54, and asparagine 74 are each glycosylated (N-linked (GlcNAc...) asparagine). The chain crosses the membrane as a helical span at residues 106–126 (GIIVTDVIATLLLALGVFCFA). Residues 127–171 (GHETGRLSGAADTQALLRNDQVYQPLRDRDDAQYSRLGGNWARNK) are Cytoplasmic-facing. One can recognise an ITAM domain in the interval 138 to 166 (DTQALLRNDQVYQPLRDRDDAQYSRLGGN). 2 positions are modified to phosphotyrosine: tyrosine 149 and tyrosine 160.

As to quaternary structure, the TCR-CD3 complex is composed of a CD3D/CD3E and a CD3G/CD3E heterodimers that preferentially associate with TCRalpha and TCRbeta, respectively, to form TCRalpha/CD3E/CD3G and TCRbeta/CD3G/CD3E trimers. In turn, the hexamer interacts with CD3Z homodimer to form the TCR-CD3 complex. Alternatively, TCRalpha and TCRbeta can be replaced by TCRgamma and TCRdelta. Interacts with coreceptors CD4 and CD8. In terms of processing, phosphorylated on Tyr residues after T-cell receptor triggering by LCK in association with CD4/CD8. As to expression, CD3D is mostly present on T-lymphocytes with its TCR-CD3 partners. Present also in fetal NK-cells.

Its subcellular location is the cell membrane. In terms of biological role, part of the TCR-CD3 complex present on T-lymphocyte cell surface that plays an essential role in adaptive immune response. When antigen presenting cells (APCs) activate T-cell receptor (TCR), TCR-mediated signals are transmitted across the cell membrane by the CD3 chains CD3D, CD3E, CD3G and CD3Z. All CD3 chains contain immunoreceptor tyrosine-based activation motifs (ITAMs) in their cytoplasmic domain. Upon TCR engagement, these motifs become phosphorylated by Src family protein tyrosine kinases LCK and FYN, resulting in the activation of downstream signaling pathways. In addition of this role of signal transduction in T-cell activation, CD3D plays an essential role in thymocyte differentiation. Indeed, participates in correct intracellular TCR-CD3 complex assembly and surface expression. In absence of a functional TCR-CD3 complex, thymocytes are unable to differentiate properly. Interacts with CD4 and CD8 and thus serves to establish a functional link between the TCR and coreceptors CD4 and CD8, which is needed for activation and positive selection of CD4 or CD8 T-cells. In Macaca fascicularis (Crab-eating macaque), this protein is T-cell surface glycoprotein CD3 delta chain (CD3D).